The sequence spans 294 residues: Acetylglutamate kinase (294 aa).

Substrate-binding positions include 63-64 (GG), Arg-85, and Asn-188.

It belongs to the acetylglutamate kinase family. ArgB subfamily.

The protein localises to the cytoplasm. The catalysed reaction is N-acetyl-L-glutamate + ATP = N-acetyl-L-glutamyl 5-phosphate + ADP. Its pathway is amino-acid biosynthesis; L-arginine biosynthesis; N(2)-acetyl-L-ornithine from L-glutamate: step 2/4. Functionally, catalyzes the ATP-dependent phosphorylation of N-acetyl-L-glutamate. This is Acetylglutamate kinase from Methanococcus maripaludis (strain C7 / ATCC BAA-1331).